A 603-amino-acid chain; its full sequence is Elongation factor 4 (603 aa).

The tr-type G domain occupies valine 7–proline 189. GTP is bound by residues aspartate 19–threonine 24 and asparagine 136–aspartate 139.

This sequence belongs to the TRAFAC class translation factor GTPase superfamily. Classic translation factor GTPase family. LepA subfamily.

Its subcellular location is the cell inner membrane. The enzyme catalyses GTP + H2O = GDP + phosphate + H(+). Required for accurate and efficient protein synthesis under certain stress conditions. May act as a fidelity factor of the translation reaction, by catalyzing a one-codon backward translocation of tRNAs on improperly translocated ribosomes. Back-translocation proceeds from a post-translocation (POST) complex to a pre-translocation (PRE) complex, thus giving elongation factor G a second chance to translocate the tRNAs correctly. Binds to ribosomes in a GTP-dependent manner. The polypeptide is Elongation factor 4 (Nostoc sp. (strain PCC 7120 / SAG 25.82 / UTEX 2576)).